A 129-amino-acid polypeptide reads, in one-letter code: Putative protein p14 (129 aa).

The sequence is that of Putative protein p14 (14) from Acyrthosiphon pisum secondary endosymbiont phage 1 (Bacteriophage APSE-1).